Reading from the N-terminus, the 304-residue chain is HTH-type transcriptional regulator AdmX (304 aa).

Residues 1 to 58 (MKLRHLEIFYTVMTCGSLSRAAESLNISQPAASKSLKNAELKLGFKLFQRVRGKLLPS) form the HTH lysR-type domain. The H-T-H motif DNA-binding region spans 18–37 (LSRAAESLNISQPAASKSLK).

Belongs to the LysR transcriptional regulatory family.

The protein localises to the cytoplasm. Its activity is regulated as follows. AdmX-mediated transcription is inhibited by indole-3-acetic and indole-3-pyruvic acids. AdmX recognizes and binds the auxin indole-3-acetic acid (IAA), which causes conformational changes in AdmX that result in the inhibition of the expression of the andrimid gene cluster and the suppression of antibiotic production. It also recognizes indole-3-pyruvic acid (IPA), an intermediate of the main IAA biosynthetic pathway in plants and plant beneficial bacteria, which also prevents andrimid synthesis, but to a much lesser extent. Positively regulates the biosynthesis of andrimid, a broad-spectrum antibiotic, by activating the expression of the adm biosynthetic gene cluster. It specifically binds to a region within the adm promoter. The sequence is that of HTH-type transcriptional regulator AdmX from Serratia plymuthica.